The sequence spans 689 residues: Small ribosomal subunit protein mS39 (689 aa).

The N-terminal 37 residues, 1–37, are a transit peptide targeting the mitochondrion; the sequence is MAGVSAVRWLGLRSRLGQPLTGRRAGLCKQARSCRFY. At Lys126 the chain carries N6-acetyllysine. PPR repeat units lie at residues 149 to 183, 184 to 219, 255 to 289, 290 to 330, 331 to 367, 368 to 404, 412 to 446, 454 to 488, 489 to 523, and 572 to 606; these read IKDI…GTTV, SLET…EALE, NAHS…RLHA, DVYT…KVKP, NLQT…GIEP, SLAT…MGKR, DDKF…DNWK, RNFY…VYFP, HSQT…GHTF, and PATS…NKIP. The segment at 665–689 is disordered; it reads NLTALTSDSDTDSSSDSDSDTSEGK. The span at 673-689 shows a compositional bias: acidic residues; that stretch reads SDTDSSSDSDSDTSEGK.

Belongs to the mitochondrion-specific ribosomal protein mS39 family. Component of the mitochondrial ribosome small subunit (28S) which comprises a 12S rRNA and about 30 distinct proteins. Associated with the 12S mitochondrial rRNA (12S mt-rRNA).

It is found in the mitochondrion. Functionally, mitochondrial RNA-binding protein that has a role in mitochondrial translation. The sequence is that of Small ribosomal subunit protein mS39 (PTCD3) from Pongo abelii (Sumatran orangutan).